We begin with the raw amino-acid sequence, 207 residues long: Large ribosomal subunit protein uL4 (207 aa).

The interval 43-85 (SRRQGTHDTKGRSEVRGGGRKPWKQKGTGRARQGSIRSPQWVG) is disordered. Positions 47–59 (GTHDTKGRSEVRG) are enriched in basic and acidic residues. Over residues 60 to 71 (GGRKPWKQKGTG) the composition is skewed to basic residues.

It belongs to the universal ribosomal protein uL4 family. Part of the 50S ribosomal subunit.

Its function is as follows. One of the primary rRNA binding proteins, this protein initially binds near the 5'-end of the 23S rRNA. It is important during the early stages of 50S assembly. It makes multiple contacts with different domains of the 23S rRNA in the assembled 50S subunit and ribosome. In terms of biological role, forms part of the polypeptide exit tunnel. The polypeptide is Large ribosomal subunit protein uL4 (Exiguobacterium sibiricum (strain DSM 17290 / CCUG 55495 / CIP 109462 / JCM 13490 / 255-15)).